The chain runs to 562 residues: ATP synthase subunit beta, mitochondrial (562 aa).

Low complexity-rich tracts occupy residues 1 to 13 (MASR…LLRS) and 20 to 40 (SKSP…SSKS). Disordered regions lie at residues 1–43 (MASR…SRAS) and 58–83 (SAAA…KITD). The N-terminal 55 residues, 1 to 55 (MASRRLLSSLLRSSSRRSVSKSPISNINPKLSSSSPSSKSRASPYGYLLTRAAEY), are a transit peptide targeting the mitochondrion. 237–244 (GGAGVGKT) is an ATP binding site.

This sequence belongs to the ATPase alpha/beta chains family. As to quaternary structure, F-type ATPases have 2 components, CF(1) - the catalytic core - and CF(0) - the membrane proton channel. CF(1) has five subunits: alpha(3), beta(3), gamma(1), delta(1), epsilon(1). CF(0) has three main subunits: a, b and c.

Its subcellular location is the mitochondrion. The protein localises to the mitochondrion inner membrane. It catalyses the reaction ATP + H2O + 4 H(+)(in) = ADP + phosphate + 5 H(+)(out). Mitochondrial membrane ATP synthase (F(1)F(0) ATP synthase or Complex V) produces ATP from ADP in the presence of a proton gradient across the membrane which is generated by electron transport complexes of the respiratory chain. F-type ATPases consist of two structural domains, F(1) - containing the extramembraneous catalytic core, and F(0) - containing the membrane proton channel, linked together by a central stalk and a peripheral stalk. During catalysis, ATP synthesis in the catalytic domain of F(1) is coupled via a rotary mechanism of the central stalk subunits to proton translocation. Subunits alpha and beta form the catalytic core in F(1). Rotation of the central stalk against the surrounding alpha(3)beta(3) subunits leads to hydrolysis of ATP in three separate catalytic sites on the beta subunits. In Hevea brasiliensis (Para rubber tree), this protein is ATP synthase subunit beta, mitochondrial (ATPB).